We begin with the raw amino-acid sequence, 490 residues long: Bifunctional protein HldE (490 aa).

The interval 1–330 (MFDFDDLSQA…RKILPHAYRA (330 aa)) is ribokinase. Residue 205–208 (NRKE) participates in ATP binding. The active site involves D275. A cytidylyltransferase region spans residues 358-490 (FTNGCFDILH…LVDRARSDQR (133 aa)).

This sequence in the N-terminal section; belongs to the carbohydrate kinase PfkB family. It in the C-terminal section; belongs to the cytidylyltransferase family. In terms of assembly, homodimer.

It catalyses the reaction D-glycero-beta-D-manno-heptose 7-phosphate + ATP = D-glycero-beta-D-manno-heptose 1,7-bisphosphate + ADP + H(+). The catalysed reaction is D-glycero-beta-D-manno-heptose 1-phosphate + ATP + H(+) = ADP-D-glycero-beta-D-manno-heptose + diphosphate. The protein operates within nucleotide-sugar biosynthesis; ADP-L-glycero-beta-D-manno-heptose biosynthesis; ADP-L-glycero-beta-D-manno-heptose from D-glycero-beta-D-manno-heptose 7-phosphate: step 1/4. Its pathway is nucleotide-sugar biosynthesis; ADP-L-glycero-beta-D-manno-heptose biosynthesis; ADP-L-glycero-beta-D-manno-heptose from D-glycero-beta-D-manno-heptose 7-phosphate: step 3/4. Its function is as follows. Catalyzes the phosphorylation of D-glycero-D-manno-heptose 7-phosphate at the C-1 position to selectively form D-glycero-beta-D-manno-heptose-1,7-bisphosphate. Catalyzes the ADP transfer from ATP to D-glycero-beta-D-manno-heptose 1-phosphate, yielding ADP-D-glycero-beta-D-manno-heptose. This chain is Bifunctional protein HldE, found in Bradyrhizobium sp. (strain ORS 278).